Here is a 915-residue protein sequence, read N- to C-terminus: Kinesin-like protein KIN-10A (915 aa).

Over residues 1–16 (MAPPTPSPRPGPPPTP) the composition is skewed to pro residues. Disordered stretches follow at residues 1-28 (MAPP…KTPA) and 34-53 (HFPA…AGGT). In terms of domain architecture, Kinesin motor spans 56-391 (PVEVIGRIRN…LEYGAKAKCI (336 aa)). 137-144 (GPTGSGKS) lines the ATP pocket. Positions 426–517 (NLQKENKLRE…QRLKEVEREK (92 aa)) form a coiled coil. Residues 676-718 (PAKKAFGDENNEPAKQTFGDENKQQPAKRVFGDENKDPSAWGA) form a disordered region.

This sequence belongs to the TRAFAC class myosin-kinesin ATPase superfamily. Kinesin family. KIN-10 subfamily.

This Oryza sativa subsp. japonica (Rice) protein is Kinesin-like protein KIN-10A.